Consider the following 431-residue polypeptide: MKILDWSQLDGAARTDALTRPVQTVATQTRDAVAALIADVRARGDAALREITARFDGVSLESFAVSEADFAAAEAAVAPELRQAMQDAVARIDAFHRAGMSEGYAVETAPGVVCEKIVRPIGRVGLYVPAGSAPLPSTALMLGVPARLAGCREVVLCTPPRKDGSVDPAVLVAAQLTGVRRVFKLGGAQAIAAMAYGTESVPSCDKLFGPGNSYVTEAKQQVAQSGAAAIDMPAGPSEVLVIADAGAQPAFVAADLLSQAEHGPDSQVLLLSDSDGLIDAVQVQLEVQLAQLSRADIARQALAQSRMIKVQALDEAFAISNRYAPEHLILALREPRAWLAQVEAAGSVFLGDYTPEALGDYCSGTNHVLPTSGAARAYSGVSVASFQNMVSVQAASKAGIDGIGQCALILARAEGLDAHANAVALRMGVAA.

Positions 127, 189, and 212 each coordinate NAD(+). Residues S237, Q259, and H262 each contribute to the substrate site. Q259 and H262 together coordinate Zn(2+). Catalysis depends on proton acceptor residues E326 and H327. 4 residues coordinate substrate: H327, D360, E414, and H419. Residue D360 coordinates Zn(2+). H419 contacts Zn(2+).

The protein belongs to the histidinol dehydrogenase family. The cofactor is Zn(2+).

It carries out the reaction L-histidinol + 2 NAD(+) + H2O = L-histidine + 2 NADH + 3 H(+). It participates in amino-acid biosynthesis; L-histidine biosynthesis; L-histidine from 5-phospho-alpha-D-ribose 1-diphosphate: step 9/9. Functionally, catalyzes the sequential NAD-dependent oxidations of L-histidinol to L-histidinaldehyde and then to L-histidine. This chain is Histidinol dehydrogenase, found in Xanthomonas euvesicatoria pv. vesicatoria (strain 85-10) (Xanthomonas campestris pv. vesicatoria).